Consider the following 221-residue polypeptide: Type II secretion system protein J (221 aa).

A propeptide spans 1–15 (MWRTNQVSSRQNMAG) (leader sequence). An N-methylphenylalanine modification is found at F16. The helical transmembrane segment at 16–36 (FTLIEVLVAIAIFASLSVGAY) threads the bilayer.

It belongs to the GSP J family. Type II secretion is composed of four main components: the outer membrane complex, the inner membrane complex, the cytoplasmic secretion ATPase and the periplasm-spanning pseudopilus. Interacts with core component epsG. In terms of processing, cleaved by prepilin peptidase. Methylated by prepilin peptidase at the amino group of the N-terminal phenylalanine once the leader sequence is cleaved by prepilin peptidase.

The protein localises to the cell inner membrane. Component of the type II secretion system required for the energy-dependent secretion of extracellular factors such as proteases and toxins from the periplasm. Part of the pseudopilus tip complex that is critical for the recognition and binding of secretion substrates. This Vibrio cholerae serotype O1 (strain ATCC 39315 / El Tor Inaba N16961) protein is Type II secretion system protein J (epsJ).